Consider the following 152-residue polypeptide: Transcriptional repressor NrdR (152 aa).

The segment at 3–34 (CPSCQHNGTRVLDSRPVDDGKSIRRRRECESC) is a zinc-finger region. One can recognise an ATP-cone domain in the interval 49-139 (LIVVKKEGVR…VYRQFKDINV (91 aa)).

Belongs to the NrdR family. Zn(2+) is required as a cofactor.

Functionally, negatively regulates transcription of bacterial ribonucleotide reductase nrd genes and operons by binding to NrdR-boxes. In Bacillus subtilis (strain 168), this protein is Transcriptional repressor NrdR.